The chain runs to 288 residues: HTH-type transcriptional regulator CzcR (288 aa).

In terms of domain architecture, HTH lysR-type spans Met-1–Thr-58. A DNA-binding region (H-T-H motif) is located at residues Val-18–Lys-37.

This sequence belongs to the LysR transcriptional regulatory family.

The chain is HTH-type transcriptional regulator CzcR (czcR) from Bacillus cereus (strain ATCC 10987 / NRS 248).